The primary structure comprises 589 residues: LRR receptor-like serine/threonine-protein kinase FEI 2 (589 aa).

Residues methionine 1–alanine 28 form the signal peptide. The Extracellular segment spans residues isoleucine 29–arginine 236. LRR repeat units follow at residues threonine 72–leucine 96, aspartate 97–cysteine 120, alanine 122–leucine 144, serine 145–leucine 168, and arginine 170–arginine 193. N-linked (GlcNAc...) asparagine glycosylation is found at asparagine 119 and asparagine 143. Residues asparagine 175, asparagine 215, and asparagine 219 are each glycosylated (N-linked (GlcNAc...) asparagine). The helical transmembrane segment at leucine 237–tryptophan 257 threads the bilayer. Residues glycine 258–aspartate 589 lie on the Cytoplasmic side of the membrane. One can recognise a Protein kinase domain in the interval leucine 304–methionine 576. Residues isoleucine 310–valine 318 and lysine 332 contribute to the ATP site. Serine 384 carries the phosphoserine modification. Residue aspartate 427 is the Proton acceptor of the active site. Residues threonine 460, threonine 461, and threonine 466 each carry the phosphothreonine modification. The residue at position 474 (tyrosine 474) is a Phosphotyrosine.

Belongs to the protein kinase superfamily. Ser/Thr protein kinase family. Interacts with the ACC synthases ACS5 and ACS9 but not ACS2, via the kinase domain. In terms of processing, autophosphorylated. As to expression, expressed in the root meristem and elongation zone, and in hypocotyls of etiolated seedlings.

It is found in the cell membrane. The enzyme catalyses L-seryl-[protein] + ATP = O-phospho-L-seryl-[protein] + ADP + H(+). It catalyses the reaction L-threonyl-[protein] + ATP = O-phospho-L-threonyl-[protein] + ADP + H(+). Involved in the signaling pathway that regulates cell wall function, including cellulose biosynthesis, likely via an 1-aminocyclopropane-1-carboxylic acid (ACC)-mediated signal (a precursor of ethylene). The chain is LRR receptor-like serine/threonine-protein kinase FEI 2 (FEI2) from Arabidopsis thaliana (Mouse-ear cress).